The primary structure comprises 596 residues: MLRRKRERRNAVKENEMVIDTPLEKRRTPGKPRATREPPISVVITGHSKGSEDDLISFVWRKVKVRLMNISYSPASVTAVVKSQDFSRLNGLNGAAFAGDHLAIRRVDGASNVTQDYRKAKTKRSFRSVSAPSLSALATQAQRNVSKTLPQSTNETIEKLRQFLQTRYQPATKFLDLGNLQQDPLLKQMGILAEASTKSKMFPALMKVASLNFPDVISVSLSDNNLQSVTAVTTLAQTWPKLLNLSLANNRITSLSDLDPWSPKTKLPELQELVLVGNPIVTTFANRAMDYQREMVSRFPKLRLLDGNSINSEIIASQSTVPFPVYQSFFDKVETEQIVNSFLAAFFKGWDENRSALVNQLYSPNATFSISLNASNVRTNFSQKTDTKKWGAYKMKSRNLLYSQSQKESKSRLFNGHEEISNAVKSLPATAHDLSDRSQWVFDGWNLVLPSVGAAIKIVVHGQFEEPQNKRLLRSFDRTLLILPGGSTGILIINDLLVIRSFAGSLGWLPGQSSVRTSNNAMSASASKPSDIVQPRPEQAMLDTRQQIVLKIKAETGLNDYYAHMCCEQNNWDYNSALASFLELKSRNVIPAEAFS.

Phosphoserine is present on residues Ser-128, Ser-130, and Ser-133. LRR repeat units lie at residues 215–236, 241–262, and 263–282; these read DVISVSLSDNNLQSVTAVTTLA, KLLNLSLANNRITSLSDLDPWS, and PKTKLPELQELVLVGNPIVT. The LRRCT domain occupies 283–338; sequence TFANRAMDYQREMVSRFPKLRLLDGNSINSEIIASQSTVPFPVYQSFFDKVETEQI. An NTF2 domain is found at 338-499; it reads IVNSFLAAFF…ILIINDLLVI (162 aa). The region spanning 543–596 is the TAP-C domain; that stretch reads DTRQQIVLKIKAETGLNDYYAHMCCEQNNWDYNSALASFLELKSRNVIPAEAFS.

It belongs to the NXF family. As to quaternary structure, interacts with mlo3 and rae1.

It is found in the nucleus. It localises to the cytoplasm. Involved in the export of mRNA from the nucleus to the cytoplasm. The protein is mRNA export factor mex67 (mex67) of Schizosaccharomyces pombe (strain 972 / ATCC 24843) (Fission yeast).